A 146-amino-acid polypeptide reads, in one-letter code: Ankyrin repeat-containing protein P16F5.05c (146 aa).

ANK repeat units lie at residues 1–31 (MDVD…ELSR), 35–64 (NGNS…KEVI), 70–99 (SGNT…DPHI), and 103–132 (YEKS…AKGS).

The protein resides in the cytoplasm. It localises to the nucleus. In Schizosaccharomyces pombe (strain 972 / ATCC 24843) (Fission yeast), this protein is Ankyrin repeat-containing protein P16F5.05c.